A 409-amino-acid polypeptide reads, in one-letter code: Serine/threonine transporter SstT (409 aa).

9 consecutive transmembrane segments (helical) span residues 24-44 (LALG…AGLF), 48-68 (FVGA…AATI), 82-102 (IIVL…IAGM), 142-162 (AIAN…GAAL), 194-214 (LGIF…ALAG), 218-238 (LLAV…PAIV), 292-312 (IPLG…VLAM), 319-339 (GIQV…VSAC), and 365-385 (VAMQ…SAET).

This sequence belongs to the dicarboxylate/amino acid:cation symporter (DAACS) (TC 2.A.23) family.

The protein resides in the cell inner membrane. It catalyses the reaction L-serine(in) + Na(+)(in) = L-serine(out) + Na(+)(out). The catalysed reaction is L-threonine(in) + Na(+)(in) = L-threonine(out) + Na(+)(out). Involved in the import of serine and threonine into the cell, with the concomitant import of sodium (symport system). In Neisseria gonorrhoeae (strain NCCP11945), this protein is Serine/threonine transporter SstT.